A 280-amino-acid polypeptide reads, in one-letter code: MSPAPVQVMGVLNVTDDSFSDGGCYLDLDDAVKHGLAMAAAGAGIVDVGGESSRPGATRVDPAVETSRVIPVVKELAAQGITVSIDTMRADVARAALQNGAQMVNDVSGGRADPAMGPLLAEADVPWVLMHWRAVSADTPHVPVRYGNVVAEVRADLLASVADAVAAGVDPARLVLDPGLGFAKTAQHNWAILHALPELVATGIPVLVGASRKRFLGALLAGPDGVMRPTDGRDTATAVISALAALHGAWGVRVHDVRASVDAIKVVEAWMGAERIERDG.

A Pterin-binding domain is found at 1–265 (MSPAPVQVMG…DVRASVDAIK (265 aa)). Asn-13 provides a ligand contact to Mg(2+). (7,8-dihydropterin-6-yl)methyl diphosphate-binding positions include Asp-86, Asn-105, Asp-177, Lys-213, and 253–255 (RVH).

The protein belongs to the DHPS family. In terms of assembly, homodimer. It depends on Mg(2+) as a cofactor.

It catalyses the reaction (7,8-dihydropterin-6-yl)methyl diphosphate + 4-aminobenzoate = 7,8-dihydropteroate + diphosphate. It participates in cofactor biosynthesis; tetrahydrofolate biosynthesis; 7,8-dihydrofolate from 2-amino-4-hydroxy-6-hydroxymethyl-7,8-dihydropteridine diphosphate and 4-aminobenzoate: step 1/2. Its function is as follows. Catalyzes the condensation of para-aminobenzoate (pABA) with 6-hydroxymethyl-7,8-dihydropterin diphosphate (DHPt-PP) to form 7,8-dihydropteroate (H2Pte), the immediate precursor of folate derivatives. This chain is Dihydropteroate synthase (folP1), found in Mycobacterium bovis (strain ATCC BAA-935 / AF2122/97).